A 78-amino-acid polypeptide reads, in one-letter code: U7-lycotoxin-Ls1a (78 aa).

The N-terminal stretch at 1 to 22 is a signal peptide; the sequence is MKLIIFTGLALLLIVSLIDVEA. Residues 23–26 constitute a propeptide that is removed on maturation; that stretch reads QNEG.

It belongs to the neurotoxin 19 (CSTX) family. 07 (U7-Lctx) subfamily. Contains 4 disulfide bonds. In terms of tissue distribution, expressed by the venom gland.

It localises to the secreted. This Lycosa singoriensis (Wolf spider) protein is U7-lycotoxin-Ls1a.